The chain runs to 439 residues: 3-phosphoshikimate 1-carboxyvinyltransferase (439 aa).

3-phosphoshikimate-binding residues include Lys-29 and Arg-34. Lys-29 lines the phosphoenolpyruvate pocket. Phosphoenolpyruvate contacts are provided by Gly-99 and Arg-128. 6 residues coordinate 3-phosphoshikimate: Ser-171, Ser-172, Gln-173, Ser-199, Asp-316, and Lys-343. Gln-173 contributes to the phosphoenolpyruvate binding site. Residue Asp-316 is the Proton acceptor of the active site. Phosphoenolpyruvate contacts are provided by Arg-347, Arg-390, and Lys-416.

Belongs to the EPSP synthase family. Monomer.

It is found in the cytoplasm. The catalysed reaction is 3-phosphoshikimate + phosphoenolpyruvate = 5-O-(1-carboxyvinyl)-3-phosphoshikimate + phosphate. The protein operates within metabolic intermediate biosynthesis; chorismate biosynthesis; chorismate from D-erythrose 4-phosphate and phosphoenolpyruvate: step 6/7. Its function is as follows. Catalyzes the transfer of the enolpyruvyl moiety of phosphoenolpyruvate (PEP) to the 5-hydroxyl of shikimate-3-phosphate (S3P) to produce enolpyruvyl shikimate-3-phosphate and inorganic phosphate. The chain is 3-phosphoshikimate 1-carboxyvinyltransferase from Deinococcus radiodurans (strain ATCC 13939 / DSM 20539 / JCM 16871 / CCUG 27074 / LMG 4051 / NBRC 15346 / NCIMB 9279 / VKM B-1422 / R1).